Consider the following 256-residue polypeptide: MRVTLALVALCLASVAALPEKQQRIVGGSVTTIEQWPSGSALLYSWNLVTYSQACGGAILNTRSILSAAHCFIGDAANRWRIRTGSTWANSGGVVHNTALIIIHPSYNTRTLDNDIAILRSATTIAQNNQARPASIAGANYNLADNQAVWAIGWGATCPGCAGSEQLRHIQIWTVNQNTCRSRYLEVGGTITDNMLCSGWLDVGGRDQCQGDSGGPLFHNNVVVGVCSWGQSCALARYPGVNARVSRFTAWIQANA.

Positions 1–17 (MRVTLALVALCLASVAA) are cleaved as a signal peptide. Positions 18-24 (LPEKQQR) are cleaved as a propeptide — activation peptide. The region spanning 25-256 (IVGGSVTTIE…RFTAWIQANA (232 aa)) is the Peptidase S1 domain. Cys55 and Cys71 are joined by a disulfide. Active-site charge relay system residues include His70 and Asp115. 2 cysteine pairs are disulfide-bonded: Cys180–Cys197 and Cys209–Cys233. The active-site Charge relay system is Ser213.

It belongs to the peptidase S1 family.

Its subcellular location is the secreted. It is found in the extracellular space. The catalysed reaction is Preferential cleavage: Arg-|-Xaa, Lys-|-Xaa.. Functionally, responsible for the activation of delta-endotoxin from Bacillus thuringiensis. The sequence is that of Trypsin CFT-1 from Choristoneura fumiferana (Spruce budworm moth).